Consider the following 60-residue polypeptide: Cytotoxin 3 (60 aa).

4 disulfides stabilise this stretch: cysteine 3/cysteine 21, cysteine 14/cysteine 38, cysteine 42/cysteine 53, and cysteine 54/cysteine 59.

This sequence belongs to the three-finger toxin family. Short-chain subfamily. Type IA cytotoxin sub-subfamily. In terms of assembly, monomer in solution; Homodimer and oligomer in the presence of negatively charged lipids forming a pore with a size ranging between 20 and 30 Angstroms. In terms of tissue distribution, expressed by the venom gland.

The protein resides in the secreted. It localises to the target cell membrane. Functionally, shows cytolytic activity on many different cells by forming pore in lipid membranes. In vivo, increases heart rate or kills the animal by cardiac arrest. In addition, it binds to heparin with high affinity, interacts with Kv channel-interacting protein 1 (KCNIP1) in a calcium-independent manner, and binds to integrin alpha-V/beta-3 (ITGAV/ITGB3) with moderate affinity. This chain is Cytotoxin 3, found in Naja mossambica (Mozambique spitting cobra).